Consider the following 351-residue polypeptide: Trace amine-associated receptor 2 (351 aa).

Over Met-1 to Ser-48 the chain is Extracellular. Residues Asn-24 and Asn-30 are each glycosylated (N-linked (GlcNAc...) asparagine). 2 cysteine pairs are disulfide-bonded: Cys-33–Cys-197 and Cys-116–Cys-201. Residues Phe-49–Ser-69 traverse the membrane as a helical segment. Topologically, residues Tyr-70–Asn-79 are cytoplasmic. A helical transmembrane segment spans residues Phe-80–Ser-100. The Extracellular segment spans residues Met-101–Ile-118. Residues Tyr-119–Ile-139 form a helical membrane-spanning segment. Residues Asp-140–Arg-162 lie on the Cytoplasmic side of the membrane. Residues Leu-163–Ala-183 form a helical membrane-spanning segment. Residues Tyr-184–Lys-207 are Extracellular-facing. Residues Leu-208–Ile-228 form a helical membrane-spanning segment. Topologically, residues Tyr-229 to Thr-263 are cytoplasmic. The helical transmembrane segment at Leu-264–Leu-284 threads the bilayer. Residues Asp-285 to Ala-299 lie on the Extracellular side of the membrane. Residue Asn-289 is glycosylated (N-linked (GlcNAc...) asparagine). A helical transmembrane segment spans residues Leu-300 to Phe-322. The Cytoplasmic portion of the chain corresponds to Arg-323 to Glu-351.

Belongs to the G-protein coupled receptor 1 family. In terms of tissue distribution, not expressed in the pons, thalamus, hypothalamus, hippocampus, caudate, putamen, frontal cortex, basal forebrain, midbrain or liver.

The protein resides in the cell membrane. Orphan olfactory receptor specific for trace amines. Trace amine compounds are enriched in animal body fluids and act on trace amine-associated receptors (TAARs) to elicit both intraspecific and interspecific innate behaviors. Ligand-binding causes a conformation change that triggers signaling via the G(s)-class of G-proteins which activate adenylate cyclase. This Homo sapiens (Human) protein is Trace amine-associated receptor 2.